The chain runs to 309 residues: Pyridoxal 5'-phosphate synthase subunit PDX1.3 (309 aa).

Position 1 is an N-acetylmethionine (M1). D40 contributes to the D-ribose 5-phosphate binding site. K97 serves as the catalytic Schiff-base intermediate with D-ribose 5-phosphate. G169 contributes to the D-ribose 5-phosphate binding site. Residue R181 participates in D-glyceraldehyde 3-phosphate binding. Residues G230 and 251–252 (GS) contribute to the D-ribose 5-phosphate site.

The protein belongs to the PdxS/SNZ family. As to quaternary structure, homodimer or heterodimer with PDX1.1 or PDX1.2. Interacts with PDX2. In terms of tissue distribution, expressed in cotyledons, rapidly dividing root stele tissues, stems, leaves, flowers, mature pollen, and siliques.

It is found in the cytoplasm. The protein resides in the cell membrane. It localises to the membrane. It catalyses the reaction aldehydo-D-ribose 5-phosphate + D-glyceraldehyde 3-phosphate + L-glutamine = pyridoxal 5'-phosphate + L-glutamate + phosphate + 3 H2O + H(+). The protein operates within cofactor biosynthesis; pyridoxal 5'-phosphate biosynthesis. In terms of biological role, catalyzes the formation of pyridoxal 5'-phosphate from ribose 5-phosphate (RBP), glyceraldehyde 3-phosphate (G3P) and ammonia. The ammonia is provided by PDX2. Can also use ribulose 5-phosphate and dihydroxyacetone phosphate as substrates, resulting from enzyme-catalyzed isomerization of RBP and G3P, respectively. Also plays an indirect role in resistance to singlet oxygen-generating photosensitizers. This is Pyridoxal 5'-phosphate synthase subunit PDX1.3 (PDX13) from Arabidopsis thaliana (Mouse-ear cress).